A 181-amino-acid polypeptide reads, in one-letter code: ATP synthase subunit delta (181 aa).

Belongs to the ATPase delta chain family. As to quaternary structure, F-type ATPases have 2 components, F(1) - the catalytic core - and F(0) - the membrane proton channel. F(1) has five subunits: alpha(3), beta(3), gamma(1), delta(1), epsilon(1). F(0) has three main subunits: a(1), b(2) and c(10-14). The alpha and beta chains form an alternating ring which encloses part of the gamma chain. F(1) is attached to F(0) by a central stalk formed by the gamma and epsilon chains, while a peripheral stalk is formed by the delta and b chains.

It is found in the cell membrane. Its function is as follows. F(1)F(0) ATP synthase produces ATP from ADP in the presence of a proton or sodium gradient. F-type ATPases consist of two structural domains, F(1) containing the extramembraneous catalytic core and F(0) containing the membrane proton channel, linked together by a central stalk and a peripheral stalk. During catalysis, ATP synthesis in the catalytic domain of F(1) is coupled via a rotary mechanism of the central stalk subunits to proton translocation. Functionally, this protein is part of the stalk that links CF(0) to CF(1). It either transmits conformational changes from CF(0) to CF(1) or is implicated in proton conduction. In Lactiplantibacillus plantarum (strain ATCC BAA-793 / NCIMB 8826 / WCFS1) (Lactobacillus plantarum), this protein is ATP synthase subunit delta.